A 530-amino-acid polypeptide reads, in one-letter code: [Pyruvate dehydrogenase [acetyl-transferring]]-phosphatase 2, mitochondrial (530 aa).

The N-terminal 67 residues, 1–67 (MSSTASYRIF…FALRKAYRHT (67 aa)), are a transit peptide targeting the mitochondrion. The 412-residue stretch at 107 to 518 (VLRFESNQLA…DDITVMVVFF (412 aa)) folds into the PPM-type phosphatase domain. Asp142, Gly143, Asp413, and Asp509 together coordinate Mn(2+).

The protein belongs to the PP2C family. It depends on Mg(2+) as a cofactor. In terms of tissue distribution, highly expressed in liver.

It localises to the mitochondrion. The enzyme catalyses O-phospho-L-seryl-[pyruvate dehydrogenase E1 alpha subunit] + H2O = L-seryl-[pyruvate dehydrogenase E1 alpha subunit] + phosphate. Mg(2+)-dependent protein phosphatase. Phosphatase activity is increased in the presence of spermine, a naturally produced polyamine. Mitochondrial enzyme that catalyzes the dephosphorylation and concomitant reactivation of the alpha subunit of the E1 component of the pyruvate dehydrogenase complex (PDC), thereby stimulating the conversion of pyruvate into acetyl-CoA. Acts as a crucial regulator of T cell metabolism and function, with a particular focus on T-helper Th17. The protein is [Pyruvate dehydrogenase [acetyl-transferring]]-phosphatase 2, mitochondrial (Pdp2) of Rattus norvegicus (Rat).